Consider the following 321-residue polypeptide: D-alanine--D-alanine ligase (321 aa).

The ATP-grasp domain occupies 103 to 303 (KKILTPENIP…YVALCRMIVE (201 aa)). ATP is bound at residue 129-186 (PLPRPYVLKPVNEGSSVGVAIIDESFNDGQPIRKDQIDPWKNFKTLLAEPFIKGRELT). Residues aspartate 254, glutamate 270, and asparagine 272 each coordinate Mg(2+).

Belongs to the D-alanine--D-alanine ligase family. Requires Mg(2+) as cofactor. Mn(2+) is required as a cofactor.

The protein localises to the cytoplasm. The enzyme catalyses 2 D-alanine + ATP = D-alanyl-D-alanine + ADP + phosphate + H(+). The protein operates within cell wall biogenesis; peptidoglycan biosynthesis. Functionally, cell wall formation. In Zymomonas mobilis subsp. mobilis (strain ATCC 31821 / ZM4 / CP4), this protein is D-alanine--D-alanine ligase.